The sequence spans 65 residues: Large ribosomal subunit protein bL35 (65 aa).

Basic residues predominate over residues Met1 to Arg15. The segment at Met1–Asn28 is disordered.

The protein belongs to the bacterial ribosomal protein bL35 family.

This chain is Large ribosomal subunit protein bL35, found in Cyanothece sp. (strain PCC 7425 / ATCC 29141).